The chain runs to 224 residues: Heme response regulator HssR (224 aa).

The Response regulatory domain occupies 3 to 116 (KCLIVDDDYK…ELLFRIQAVL (114 aa)). Aspartate 52 carries the post-translational modification 4-aspartylphosphate. The ompR/PhoB-type DNA-binding region spans 124–222 (QDIIKLGNVT…VRGQGYRVIT (99 aa)).

In terms of processing, phosphorylated by HssS.

The protein resides in the cytoplasm. In terms of biological role, member of the two-component regulatory system HssS/HssR involved in intracellular heme homeostasis and tempering of staphylococcal virulence. Phosphorylated HssR binds to a direct repeat sequence within hrtAB promoter and activates the expression of hrtAB, an efflux pump, in response to extracellular heme, hemin, hemoglobin or blood. This Staphylococcus haemolyticus (strain JCSC1435) protein is Heme response regulator HssR (hssR).